The chain runs to 470 residues: TNF receptor-associated factor 4 (470 aa).

The RING-type zinc finger occupies 18–58; that stretch reads CPLCGKPMREPVQVSTCGHRFCDTCLQEFLSEGVFKCPEDQ. 3 TRAF-type zinc fingers span residues 102 to 154, 155 to 208, and 209 to 266; these read HLNT…EAYE, SHEG…DTIQ, and SHQY…KLAM. K263 participates in a covalent cross-link: Glycyl lysine isopeptide (Lys-Gly) (interchain with G-Cter in ubiquitin). Residues 277–309 adopt a coiled-coil conformation; sequence HLAMMCALVSRQRQELQELRRELEELSVGSDGV. The region spanning 307 to 462 is the MATH domain; the sequence is DGVLIWKIGS…DDAVFIRAAV (156 aa). Phosphoserine is present on S426.

It belongs to the TNF receptor-associated factor family. B subfamily. Homotrimer. Interacts with LTBR/TNFRSF3, NGFR/TNFRSF16, RPS6KB1 and TGFB1I1. Interacts with SMURF1. Interacts (via TRAF domain) with MAP3K4 (via kinase domain). Interacts with NCF1, TICAM1, IRAK1 and TRAF6, and is probably part of a complex containing TRAF4, NCF1, TICAM1, IRAK1 and TRAF6. Interacts (via MATH domain) with GP6 and GP1BB. Interacts with EGFR (via C-terminal region); this interaction promotes the formation of EGFR asymmetric dimers. Interacts with PKM; this interaction promotes PKM kinase activity. Post-translationally, polyubiquitinated, leading to its proteasomal degradation. Ubiquitinated at Lys-263 by the SCF(FBXL2) complex, leading to its degradation by the proteasome. As to expression, expressed in epithelial cells of thymus, dendritic cells of lymph node, and in the basal cell layer of epithelia such as epidermis, nasopharynx, respiratory tract, salivary gland, and esophagus.

Its subcellular location is the cytoplasm. It localises to the nucleus. It is found in the perinuclear region. The protein localises to the cell junction. The protein resides in the tight junction. Its subcellular location is the cell membrane. It localises to the cytoskeleton. It catalyses the reaction S-ubiquitinyl-[E2 ubiquitin-conjugating enzyme]-L-cysteine + [acceptor protein]-L-lysine = [E2 ubiquitin-conjugating enzyme]-L-cysteine + N(6)-ubiquitinyl-[acceptor protein]-L-lysine.. The protein operates within protein degradation; proteasomal ubiquitin-dependent pathway. Adapter protein with E3 ligase activity that is involved in many diverse biological processes including cell proliferation, migration, differentiation, DNA repair, platelet activation or apoptosis. Promotes EGFR-mediated signaling by facilitating the dimerization of EGFR and downstream AKT activation thereby promoting cell proliferation. Ubiquitinates SMURF2 through 'Lys-48'-linked ubiquitin chain leading to SMURF2 degradation through the proteasome and subsequently osteogenic differentiation. Promotes 'Lys-63'-mediated ubiquitination of CHK1 which in turn activates cell cycle arrest and activation of DNA repair. In addition, promotes an atypical 'Lys-29'-linked ubiquitination at the C-terminal end of IRS1 which is crucial for insulin-like growth factor (IGF) signal transduction. Regulates activation of NF-kappa-B in response to signaling through Toll-like receptors. Required for normal skeleton development, and for normal development of the respiratory tract. Required for activation of RPS6KB1 in response to TNF signaling. Modulates TRAF6 functions. Inhibits adipogenic differentiation by activating pyruvate kinase PKM activity and subsequently the beta-catenin signaling pathway. In Homo sapiens (Human), this protein is TNF receptor-associated factor 4 (TRAF4).